Here is a 333-residue protein sequence, read N- to C-terminus: Tryptophan--tRNA ligase (333 aa).

Residues 9-11 (QPT) and 17-18 (GN) contribute to the ATP site. The short motif at 10-18 (PTNNLTLGN) is the 'HIGH' region element. D140 contributes to the L-tryptophan binding site. ATP-binding positions include 152–154 (GQD), I191, and 200–204 (KMSKS). Residues 200–204 (KMSKS) carry the 'KMSKS' region motif.

The protein belongs to the class-I aminoacyl-tRNA synthetase family. Homodimer.

Its subcellular location is the cytoplasm. It carries out the reaction tRNA(Trp) + L-tryptophan + ATP = L-tryptophyl-tRNA(Trp) + AMP + diphosphate + H(+). Catalyzes the attachment of tryptophan to tRNA(Trp). In Ureaplasma parvum serovar 3 (strain ATCC 700970), this protein is Tryptophan--tRNA ligase.